Consider the following 588-residue polypeptide: Sentrin-specific protease 2 (588 aa).

The Nuclear localization signal motif lies at 28-31 (KRRR). S32 carries the phosphoserine modification. The Nuclear localization signal motif lies at 47–52 (PAKRPR). The axin-binding stretch occupies residues 72 to 381 (GFPFQLTTKP…EKEISNALGH (310 aa)). The disordered stretch occupies residues 157 to 184 (EGYNRRPSGRRHSKSNPESSLPWKPQEQ). The Nuclear export signal motif lies at 316–331 (LEPDLSEEVSARLRLG). Phosphoserine occurs at positions 332 and 343. The interval 394–558 (LRITRGDIQT…MFTCKYADYI (165 aa)) is protease. Catalysis depends on residues H477 and D494. The active-site Nucleophile is C547.

This sequence belongs to the peptidase C48 family. In terms of assembly, binds to SUMO2 and SUMO3. Interacts with the C-terminal domain of NUP153 via its N-terminus. Interacts with MTA1. Binds to AXIN1. Post-translationally, polyubiquitinated; which leads to proteasomal degradation. In terms of tissue distribution, ubiquitous. Highly expressed in brain, lung and testis.

The protein localises to the nucleus. The protein resides in the nuclear pore complex. It localises to the nucleus membrane. It is found in the cytoplasm. Its function is as follows. Protease that catalyzes two essential functions in the SUMO pathway. The first is the hydrolysis of an alpha-linked peptide bond at the C-terminal end of the small ubiquitin-like modifier (SUMO) propeptides, SUMO1, SUMO2 and SUMO3 leading to the mature form of the proteins. The second is the deconjugation of SUMO1, SUMO2 and SUMO3 from targeted proteins, by cleaving an epsilon-linked peptide bond between the C-terminal glycine of the mature SUMO and the lysine epsilon-amino group of the target protein. May down-regulate CTNNB1 levels and thereby modulate the Wnt pathway. Deconjugates SUMO2 from MTA1. Plays a dynamic role in adipogenesis by desumoylating and promoting the stabilization of CEBPB. Acts as a regulator of the cGAS-STING pathway by catalyzing desumoylation of CGAS and STING1 during the late phase of viral infection. This Rattus norvegicus (Rat) protein is Sentrin-specific protease 2 (Senp2).